A 729-amino-acid chain; its full sequence is Phosphoribosylformylglycinamidine synthase subunit PurL (729 aa).

The active site involves histidine 54. ATP is bound by residues tyrosine 57 and lysine 96. Glutamate 98 contributes to the Mg(2+) binding site. Substrate contacts are provided by residues 99–102 (SHNH) and arginine 121. The Proton acceptor role is filled by histidine 100. Residue aspartate 122 participates in Mg(2+) binding. Substrate is bound at residue glutamine 245. Position 273 (aspartate 273) interacts with Mg(2+). Substrate is bound at residue 317–319 (ETQ). The ATP site is built by aspartate 495 and glycine 532. Asparagine 533 is a binding site for Mg(2+). Serine 535 lines the substrate pocket.

Belongs to the FGAMS family. Monomer. Part of the FGAM synthase complex composed of 1 PurL, 1 PurQ and 2 PurS subunits.

It is found in the cytoplasm. The enzyme catalyses N(2)-formyl-N(1)-(5-phospho-beta-D-ribosyl)glycinamide + L-glutamine + ATP + H2O = 2-formamido-N(1)-(5-O-phospho-beta-D-ribosyl)acetamidine + L-glutamate + ADP + phosphate + H(+). It functions in the pathway purine metabolism; IMP biosynthesis via de novo pathway; 5-amino-1-(5-phospho-D-ribosyl)imidazole from N(2)-formyl-N(1)-(5-phospho-D-ribosyl)glycinamide: step 1/2. Functionally, part of the phosphoribosylformylglycinamidine synthase complex involved in the purines biosynthetic pathway. Catalyzes the ATP-dependent conversion of formylglycinamide ribonucleotide (FGAR) and glutamine to yield formylglycinamidine ribonucleotide (FGAM) and glutamate. The FGAM synthase complex is composed of three subunits. PurQ produces an ammonia molecule by converting glutamine to glutamate. PurL transfers the ammonia molecule to FGAR to form FGAM in an ATP-dependent manner. PurS interacts with PurQ and PurL and is thought to assist in the transfer of the ammonia molecule from PurQ to PurL. This Staphylococcus carnosus (strain TM300) protein is Phosphoribosylformylglycinamidine synthase subunit PurL.